Reading from the N-terminus, the 300-residue chain is UDP-3-O-acyl-N-acetylglucosamine deacetylase (300 aa).

Positions 78, 237, and 241 each coordinate Zn(2+). His264 functions as the Proton donor in the catalytic mechanism.

Belongs to the LpxC family. Zn(2+) is required as a cofactor.

It catalyses the reaction a UDP-3-O-[(3R)-3-hydroxyacyl]-N-acetyl-alpha-D-glucosamine + H2O = a UDP-3-O-[(3R)-3-hydroxyacyl]-alpha-D-glucosamine + acetate. It participates in glycolipid biosynthesis; lipid IV(A) biosynthesis; lipid IV(A) from (3R)-3-hydroxytetradecanoyl-[acyl-carrier-protein] and UDP-N-acetyl-alpha-D-glucosamine: step 2/6. In terms of biological role, catalyzes the hydrolysis of UDP-3-O-myristoyl-N-acetylglucosamine to form UDP-3-O-myristoylglucosamine and acetate, the committed step in lipid A biosynthesis. This Acinetobacter baumannii (strain AB307-0294) protein is UDP-3-O-acyl-N-acetylglucosamine deacetylase.